Here is a 912-residue protein sequence, read N- to C-terminus: Microtubule-associated protein 10 (912 aa).

Disordered stretches follow at residues 31-50 (VAEE…RPSR), 209-239 (KSVE…ADKP), 254-296 (GRAF…QEGT), 335-366 (ASEE…SATG), 443-469 (SPES…NEKS), and 730-859 (RACD…VSSY). Polar residues predominate over residues 211–229 (VEVSPQTWQENQQLQQPDS). Residues 254 to 263 (GRAFHSKADS) show a composition bias toward basic and acidic residues. Positions 266–295 (TDSMENGKTNSDMCSKGSSERSVSPPNQEG) are enriched in polar residues. The segment covering 347–362 (ENVNPPTHTNPPEHTN) has biased composition (low complexity). The span at 452–468 (CKSESKKDKLSVGENEK) shows a compositional bias: basic and acidic residues. Residues 735–768 (SPGTENPKNSQHTSTSSETRLSIRKNSSAKSSIL) show a composition bias toward polar residues. The segment covering 796–807 (EASSSDFSSSQW) has biased composition (low complexity). Positions 841–859 (GCKSSEKSQSPRTSQVSSY) are enriched in polar residues.

In terms of assembly, interacts (via middle region) with microtubules.

The protein localises to the cytoplasm. It is found in the cytoskeleton. The protein resides in the spindle pole. Its subcellular location is the microtubule organizing center. It localises to the centrosome. The protein localises to the midbody. Its function is as follows. Microtubule-associated protein (MAP) that plays a role in the regulation of cell division; promotes microtubule stability and participates in the organization of the spindle midzone and normal progress of cytokinesis. The protein is Microtubule-associated protein 10 (MAP10) of Bos taurus (Bovine).